The following is a 483-amino-acid chain: Kynureninase 1 (483 aa).

Residues L147, T148, 175–178 (FPSD), S232, D261, H264, and Y286 contribute to the pyridoxal 5'-phosphate site. Residue K287 is modified to N6-(pyridoxal phosphate)lysine. Pyridoxal 5'-phosphate contacts are provided by W326 and N354.

It belongs to the kynureninase family. As to quaternary structure, homodimer. Pyridoxal 5'-phosphate serves as cofactor.

It localises to the cytoplasm. The enzyme catalyses L-kynurenine + H2O = anthranilate + L-alanine + H(+). The catalysed reaction is 3-hydroxy-L-kynurenine + H2O = 3-hydroxyanthranilate + L-alanine + H(+). It participates in amino-acid degradation; L-kynurenine degradation; L-alanine and anthranilate from L-kynurenine: step 1/1. The protein operates within cofactor biosynthesis; NAD(+) biosynthesis; quinolinate from L-kynurenine: step 2/3. Its function is as follows. Catalyzes the cleavage of L-kynurenine (L-Kyn) and L-3-hydroxykynurenine (L-3OHKyn) into anthranilic acid (AA) and 3-hydroxyanthranilic acid (3-OHAA), respectively. The chain is Kynureninase 1 (bna5-1) from Aspergillus terreus (strain NIH 2624 / FGSC A1156).